A 648-amino-acid chain; its full sequence is ATP-dependent zinc metalloprotease FtsH 4 (648 aa).

The Cytoplasmic segment spans residues 1–6 (MKQSHK). Residues 7-27 (TLLLWVLLIMMFLAIWQFLSP) form a helical membrane-spanning segment. Over 28–111 (DSRPATQVAF…VFFEKEDTSP (84 aa)) the chain is Periplasmic. The chain crosses the membrane as a helical span at residues 112–132 (FWPGAIMYLLPTVFLLVMFYL). Residues 133 to 648 (FMRQLQAGGG…FGTPKPAPST (516 aa)) lie on the Cytoplasmic side of the membrane. 205 to 212 (GPPGTGKT) is a binding site for ATP. Position 427 (His-427) interacts with Zn(2+). Residue Glu-428 is part of the active site. Zn(2+) is bound by residues His-431 and Asp-504. Residues 622–648 (YSDRDRAAKEKRRAASIFGTPKPAPST) form a disordered region.

This sequence in the central section; belongs to the AAA ATPase family. In the C-terminal section; belongs to the peptidase M41 family. Homohexamer. It depends on Zn(2+) as a cofactor.

It localises to the cell inner membrane. Acts as a processive, ATP-dependent zinc metallopeptidase for both cytoplasmic and membrane proteins. Plays a role in the quality control of integral membrane proteins. This chain is ATP-dependent zinc metalloprotease FtsH 4, found in Sorangium cellulosum (strain So ce56) (Polyangium cellulosum (strain So ce56)).